The sequence spans 215 residues: Ribonuclease T (215 aa).

The 175-residue stretch at 20–194 (VVIDVETAGF…YDTEQTAQLF (175 aa)) folds into the Exonuclease domain. 4 residues coordinate Mg(2+): aspartate 23, glutamate 25, histidine 181, and aspartate 186. Histidine 181 acts as the Proton donor/acceptor in catalysis.

The protein belongs to the RNase T family. As to quaternary structure, homodimer. Requires Mg(2+) as cofactor.

Functionally, trims short 3' overhangs of a variety of RNA species, leaving a one or two nucleotide 3' overhang. Responsible for the end-turnover of tRNA: specifically removes the terminal AMP residue from uncharged tRNA (tRNA-C-C-A). Also appears to be involved in tRNA biosynthesis. In Klebsiella pneumoniae subsp. pneumoniae (strain ATCC 700721 / MGH 78578), this protein is Ribonuclease T.